The chain runs to 227 residues: Cytochrome c oxidase subunit 2 (227 aa).

The Mitochondrial intermembrane portion of the chain corresponds to 1-14 (MAHAAQVGLQDATS). Residues 15–45 (PIMEELITFHDHALMIIFLICFLVLYALFLT) form a helical membrane-spanning segment. Residues 46–59 (LTTKLTNTNISDAQ) lie on the Mitochondrial matrix side of the membrane. Residues 60–87 (EMETVWTILPAIILVLIALPSLRILYMT) traverse the membrane as a helical segment. Over 88–227 (DEVNDPSLTI…IFEMGPVFTL (140 aa)) the chain is Mitochondrial intermembrane. Cu cation contacts are provided by His-161, Cys-196, Glu-198, Cys-200, His-204, and Met-207. Glu-198 lines the Mg(2+) pocket.

This sequence belongs to the cytochrome c oxidase subunit 2 family. As to quaternary structure, component of the cytochrome c oxidase (complex IV, CIV), a multisubunit enzyme composed of 14 subunits. The complex is composed of a catalytic core of 3 subunits MT-CO1, MT-CO2 and MT-CO3, encoded in the mitochondrial DNA, and 11 supernumerary subunits COX4I1 (or COX4I2), COX5A, COX5B, COX6A1 (or COX6A2), COX6B1 (or COX6B2), COX6C, COX7A2 (or COX7A1), COX7B, COX7C, COX8A and NDUFA4, which are encoded in the nuclear genome. The complex exists as a monomer or a dimer and forms supercomplexes (SCs) in the inner mitochondrial membrane with NADH-ubiquinone oxidoreductase (complex I, CI) and ubiquinol-cytochrome c oxidoreductase (cytochrome b-c1 complex, complex III, CIII), resulting in different assemblies (supercomplex SCI(1)III(2)IV(1) and megacomplex MCI(2)III(2)IV(2)). Found in a complex with TMEM177, COA6, COX18, COX20, SCO1 and SCO2. Interacts with TMEM177 in a COX20-dependent manner. Interacts with COX20. Interacts with COX16. Cu cation is required as a cofactor.

Its subcellular location is the mitochondrion inner membrane. The catalysed reaction is 4 Fe(II)-[cytochrome c] + O2 + 8 H(+)(in) = 4 Fe(III)-[cytochrome c] + 2 H2O + 4 H(+)(out). Its function is as follows. Component of the cytochrome c oxidase, the last enzyme in the mitochondrial electron transport chain which drives oxidative phosphorylation. The respiratory chain contains 3 multisubunit complexes succinate dehydrogenase (complex II, CII), ubiquinol-cytochrome c oxidoreductase (cytochrome b-c1 complex, complex III, CIII) and cytochrome c oxidase (complex IV, CIV), that cooperate to transfer electrons derived from NADH and succinate to molecular oxygen, creating an electrochemical gradient over the inner membrane that drives transmembrane transport and the ATP synthase. Cytochrome c oxidase is the component of the respiratory chain that catalyzes the reduction of oxygen to water. Electrons originating from reduced cytochrome c in the intermembrane space (IMS) are transferred via the dinuclear copper A center (CU(A)) of subunit 2 and heme A of subunit 1 to the active site in subunit 1, a binuclear center (BNC) formed by heme A3 and copper B (CU(B)). The BNC reduces molecular oxygen to 2 water molecules using 4 electrons from cytochrome c in the IMS and 4 protons from the mitochondrial matrix. The protein is Cytochrome c oxidase subunit 2 (MT-CO2) of Homo sapiens (Human).